We begin with the raw amino-acid sequence, 221 residues long: MFIYKDINYAINNRFRGFYPVVIDIESAGFQADTDALLEIAIVTLKMNKSGWLKIDDRLHFHIIPFKGSIIKAESVAFNKIDPFNPLRGAVSEKNALKNIFKLVRKKININKCRKGILVAHNANFDHNFLMAASKRVGNLNNPFHPFTTFDTAALSGLIFGQTVLAKACKLAGIPFDTNQAHSALYDTIQTAYLFCELVNRWKRLGGWPPNSSHRKKTDEI.

The Exonuclease domain maps to 21–195 (VVIDIESAGF…YDTIQTAYLF (175 aa)). Asp-24, Glu-26, His-182, and Asp-187 together coordinate Mg(2+). Catalysis depends on His-182, which acts as the Proton donor/acceptor.

It belongs to the RNase T family. In terms of assembly, homodimer. The cofactor is Mg(2+).

In terms of biological role, trims short 3' overhangs of a variety of RNA species, leaving a one or two nucleotide 3' overhang. Responsible for the end-turnover of tRNA: specifically removes the terminal AMP residue from uncharged tRNA (tRNA-C-C-A). Also appears to be involved in tRNA biosynthesis. This chain is Ribonuclease T, found in Buchnera aphidicola subsp. Cinara cedri (strain Cc).